The chain runs to 255 residues: 3-hydroxyacyl-CoA dehydrogenase type-2 (255 aa).

Residues serine 14, leucine 16, aspartate 35, aspartate 58, valine 59, and cysteine 85 each contribute to the NAD(+) site. Serine 149 is a substrate binding site. NAD(+)-binding residues include tyrosine 162, lysine 166, phenylalanine 195, and threonine 197. Tyrosine 162 serves as the catalytic Proton acceptor.

Belongs to the short-chain dehydrogenases/reductases (SDR) family. Component of mitochondrial ribonuclease P, a complex composed of rswl/MRPP1, scu/MRPP2 and mldr/MRPP3. Found in many tissues including CNS, imaginal disks and salivary glands. Highest expression in both embryonic gonadal primordia and mature ovaries and testes.

Its subcellular location is the mitochondrion. It catalyses the reaction a (3S)-3-hydroxyacyl-CoA + NAD(+) = a 3-oxoacyl-CoA + NADH + H(+). The catalysed reaction is (3S)-3-hydroxybutanoyl-CoA + NAD(+) = acetoacetyl-CoA + NADH + H(+). The enzyme catalyses testosterone + NAD(+) = androst-4-ene-3,17-dione + NADH + H(+). It carries out the reaction 5alpha-androstane-3alpha,17beta-diol + NAD(+) = 17beta-hydroxy-5alpha-androstan-3-one + NADH + H(+). It catalyses the reaction 17beta-estradiol + NAD(+) = estrone + NADH + H(+). The catalysed reaction is ursodeoxycholate + NAD(+) = 7-oxolithocholate + NADH + H(+). The enzyme catalyses 3beta,7beta-dihydroxy-5beta-cholan-24-oate + NAD(+) = 3beta-hydroxy-7-oxo-5beta-cholan-24-oate + NADH + H(+). It carries out the reaction 11-dehydrocorticosterone + NAD(+) = pregn-4-ene-3,11,20,21-tetraone + NADH + H(+). It catalyses the reaction cortisone + NAD(+) = 17alpha-hydroxypregn-4-en-3,11,20-trione-21-al + NADH + H(+). The catalysed reaction is cortisol + NAD(+) = 11beta,17alpha-dihydroxypregn-4-ene-3,20,21-trione + NADH + H(+). The enzyme catalyses 5alpha-pregnan-20beta-ol-3-one + NAD(+) = 5alpha-pregnane-3,20-dione + NADH + H(+). It carries out the reaction 17beta-hydroxy-5alpha-androstan-3-one + NAD(+) = 5alpha-androstan-3,17-dione + NADH + H(+). Mitochondrial dehydrogenase involved in pathways of fatty acid, and steroid metabolism. Versatile enzyme presenting two types of activity; L-3-hydroxyacyl-CoA dehydrogenase ((3S)-3-hydroxyacyl-CoA dehydrogenase) activity and hydroxysteroid dehydrogenase (HSD) activity with a wide substrate spectrum. As a (3S)-3-hydroxyacyl-CoA dehydrogenase, it functions in the third step of the fatty acid beta-oxidation pathway, a major metabolic process in which fatty acids are oxidized to provide a significant source of energy, while also generating acyl-CoA metabolites used by many metabolic routes. As a HSD, it functions in the degradation pathways of glucocorticoids and sex steroids and epimerization of bile acids; catalyzes the beta-oxidation at position 17 of androgens and estrogens, has 3-alpha-hydroxysteroid dehydrogenase activity with androsterone, and carries out oxidative conversions of 7-beta-hydroxylated bile acids like ursodeoxycholate or isoursodeoxycholate (also known as 3-beta,7-beta-dihydroxy-5-beta-cholan-24-oate or 7-beta-hydroxyisolithocholate, respectively). Also exhibits 20-beta-OH and 21-OH dehydrogenase activities with C21 steroids. Essential for structural and functional integrity of mitochondria. Required for cell survival during embryonic development. May play a role in germline formation. Functionally, in addition to mitochondrial dehydrogenase activity, moonlights as a component of mitochondrial ribonuclease P, a complex that cleaves tRNA molecules in their 5'-ends. Essential for the structural and functional integrity of mitochondria. Function is essential for pupal development. This chain is 3-hydroxyacyl-CoA dehydrogenase type-2, found in Drosophila melanogaster (Fruit fly).